The following is a 138-amino-acid chain: Superoxide dismutase [Mn] (138 aa).

Residues H1, H49, D133, and H137 each contribute to the Mn(2+) site.

This sequence belongs to the iron/manganese superoxide dismutase family. It depends on Mn(2+) as a cofactor.

The enzyme catalyses 2 superoxide + 2 H(+) = H2O2 + O2. Functionally, destroys superoxide anion radicals which are normally produced within the cells and which are toxic to biological systems. This chain is Superoxide dismutase [Mn] (sodA), found in Mycobacterium celatum.